Consider the following 658-residue polypeptide: Transcription factor cep-1 (658 aa).

Residues 238–428 (EEWLTFEVKK…RDWKNFCEKR (191 aa)) mediate DNA binding. Zn(2+) contacts are provided by C319, H322, C375, and C379. A disordered region spans residues 450–477 (QSSLHSGPSSPEKVTDTSQMFQSTSSSS). Residues 466–476 (TSQMFQSTSSS) are compositionally biased toward low complexity. A required for tertiary structure stability of the protein region spans residues 535-564 (QYGLQRQVKLSEKEYSKFVAFFAKEGENEI).

It belongs to the p53 family. As to quaternary structure, homodimer. Interacts (via C-terminus domain) with prmt-5; not methylated by prmt-5. Interacts with cbp-1 (via HAT domain); cep-1 transcriptional activity may be inhibited by interaction with methylated cbp-1. Component of a complex that contains prmt-5 and cbp-1. Interacts with ape-1; the interaction inhibits pro-apoptotic activity of cep-1. Requires Zn(2+) as cofactor. Post-translationally, phosphorylated in response to IR-induced DNA damage which is thought to be mediated by akt-1.

The protein resides in the nucleus. Its function is as follows. Transcriptional activator that binds the same DNA consensus sequence as p53. Has a role in normal development to ensure proper meiotic chromosome segregation. Promotes apoptosis under conditions of cellular and genotoxic stress in response to DNA damage, hypoxia, or starvation. However, not required for DNA repair in response to UV-C or to regulate cell-cycle progression. Regulates germline apoptosis in response to DNA damage. Required for induction of ced-13 in response to DNA damage. Its pro-apoptotic activity is inhibited when bound to ape-1 in vitro. Regulates germline proliferation by activating phg-1. Regulates DNA damage-induced apoptosis by inducing transcription of the programmed cell death activator egl-1. Negatively regulates lifespan. This chain is Transcription factor cep-1, found in Caenorhabditis briggsae.